We begin with the raw amino-acid sequence, 151 residues long: Large ribosomal subunit protein uL13 (151 aa).

It belongs to the universal ribosomal protein uL13 family. In terms of assembly, part of the 50S ribosomal subunit.

Functionally, this protein is one of the early assembly proteins of the 50S ribosomal subunit, although it is not seen to bind rRNA by itself. It is important during the early stages of 50S assembly. The sequence is that of Large ribosomal subunit protein uL13 from Synechocystis sp. (strain ATCC 27184 / PCC 6803 / Kazusa).